The following is a 763-amino-acid chain: DEK domain-containing chromatin-associated protein 3 (763 aa).

2 disordered regions span residues 1–324 and 458–681; these read MGED…RERK and TGDV…SDKV. Residues 11–20 are compositionally biased toward polar residues; sequence PTANKTTSLE. Composition is skewed to basic and acidic residues over residues 32–44, 72–97, 124–172, and 180–242; these read AGGK…AKDE, SEVK…KDEG, TVMK…KANG, and DIKE…KVED. Residues 60–96 are a coiled coil; sequence KDDEKAETEDKESEVKKNEDNAETQKMEEKVEVTKDE. Residues 214-286 are a coiled coil; sequence GKEKEDKEEN…KEESKGSKKR (73 aa). The segment covering 243–252 has biased composition (acidic residues); the sequence is EKEGSEDEND. A compositionally biased stretch (basic and acidic residues) spans 253 to 264; that stretch reads NEKVESKDAKED. Positions 265 to 277 are enriched in acidic residues; that stretch reads EKEETNDDKEDEK. The Nuclear localization signal 1 motif lies at 284 to 291; sequence KKRGKGTS. Over residues 295–311 the composition is skewed to basic and acidic residues; the sequence is KVREKNKTEEVKKDAEP. Residues 475 to 484 are compositionally biased toward basic residues; the sequence is KGAKRKRTPK. The short motif at 483–490 is the Nuclear localization signal 2 element; the sequence is PKKTSPTA. Low complexity predominate over residues 485–496; that stretch reads KTSPTAGSSSSK. The stretch at 513-551 forms a coiled coil; the sequence is KKSLAHSDDESEEEKEEEEKQEEEKAEEKEEKKEEENEN. Over residues 521–533 the composition is skewed to acidic residues; it reads DESEEEKEEEEKQ. Residues 534 to 547 show a composition bias toward basic and acidic residues; that stretch reads EEEKAEEKEEKKEE. Residues 557–578 are compositionally biased toward acidic residues; that stretch reads SEDEAPQPSESEEKDESEEHSE. 2 stretches are compositionally biased toward low complexity: residues 606–615 and 650–660; these read AVVAAKSSPP and PIKASPAPSKS. The segment covering 661–681 has biased composition (basic and acidic residues); it reads ASKEKPVKRAGKGKDKPSDKV. The 56-residue stretch at 676-731 folds into the DEK-C domain; that stretch reads KPSDKVLKNAIVEILKRVDFSTATFTDILKELAKEFTEDLTPRKSSIKMIIQEELT. 2 consecutive DNA-binding regions follow at residues 694 to 708 and 723 to 727; these read DFST…KELA and KMIIQ. Positions 723–753 form a coiled coil; it reads KMIIQEELTKLADEEEEEEKKEEDSEKEEAG. Residues 730-763 are disordered; sequence LTKLADEEEEEEKKEEDSEKEEAGGSGGGEEVKA. The segment covering 753-763 has biased composition (gly residues); sequence GGSGGGEEVKA.

Found in a mRNA splicing-dependent exon junction complex (EJC). Binds specifically histones H3 and H4. Interacts with TOP1A, SCC3, At1g61730, At1g20940, At1g13930, DEK4, HDT1, NIT1, SHL, CYP19-1, GEBPL, HSP70-3, PDP2, PDP3, KIN2, RPL11A and PDS5A. As to expression, highly expressed in young seedlings.

Its subcellular location is the nucleus. The protein resides in the nucleolus. Its function is as follows. Chromatin-associated protein which contributes to the modulation of chromatin structure (such as super-helical structure of DNA) and function. Binds to chromatin of protein-coding genes throughout the genome to regulate nucleosome occupancy and chromatin accessibility, and to modulate the expression of target genes. Negative regulator of stress tolerance (e.g. high salt). This is DEK domain-containing chromatin-associated protein 3 from Arabidopsis thaliana (Mouse-ear cress).